A 201-amino-acid chain; its full sequence is MTDPVTLDGEGQIGEFDEKRAENAVRELLIAVGEDPDREGLRETPARVARAYREIFAGLWQEPEDVLTTTFDLGHDEMVLVKDIEVFSTCEHHLVPFRGVAHVGYIPSTSGKITGLSKLARLVDVYARRPQVQERLTTQIADSLMEILEPRGVIVVVECEHMCMSMRGIRKPGAKTLTSAVRGQLRDVATRNEAMSLIMAR.

Zn(2+) contacts are provided by C90, H93, and C163.

It belongs to the GTP cyclohydrolase I family. As to quaternary structure, toroid-shaped homodecamer, composed of two pentamers of five dimers.

It carries out the reaction GTP + H2O = 7,8-dihydroneopterin 3'-triphosphate + formate + H(+). It participates in cofactor biosynthesis; 7,8-dihydroneopterin triphosphate biosynthesis; 7,8-dihydroneopterin triphosphate from GTP: step 1/1. This chain is GTP cyclohydrolase 1 (folE), found in Streptomyces coelicolor (strain ATCC BAA-471 / A3(2) / M145).